A 341-amino-acid chain; its full sequence is MNLSEELDSIYKEAIQKIGSSISEEDLDKNKNDFIGKKGKLTAVLKNVASLSIEEKKTVGQKANELSKKLETFISETKTSLKKKLFEKQAASEFFDVLRPLSKPSNGSLHPITQIQYEIEDIFASMGFSVMDGPEIETDTNNFGALNFTEDHPAREMQDTFYLENGNLLRTHTSAIQVRTLRKLKPPFRIIAPGRVFRYEEVDASHEHTFYQIEGMVVGKDISAANLIDTMQVLLSRIFEKEIKTRLRPGYFPFVEPGFELDISCLVCDGKGCPVCKQSGWLELLPCGLIHPNVLSHAGLDPKEWTGFAFGLGLDRLVMMRYGIHDIRYFQSGNLRFLKQF.

Residue Glu256 participates in Mg(2+) binding.

This sequence belongs to the class-II aminoacyl-tRNA synthetase family. Phe-tRNA synthetase alpha subunit type 1 subfamily. As to quaternary structure, tetramer of two alpha and two beta subunits. Mg(2+) is required as a cofactor.

It is found in the cytoplasm. The enzyme catalyses tRNA(Phe) + L-phenylalanine + ATP = L-phenylalanyl-tRNA(Phe) + AMP + diphosphate + H(+). This is Phenylalanine--tRNA ligase alpha subunit from Leptospira interrogans serogroup Icterohaemorrhagiae serovar Lai (strain 56601).